We begin with the raw amino-acid sequence, 307 residues long: tRNA N(3)-methylcytidine methyltransferase trm140 (307 aa).

7 residues coordinate S-adenosyl-L-methionine: tryptophan 83, tyrosine 87, glycine 125, aspartate 150, aspartate 176, leucine 177, and isoleucine 197.

Belongs to the methyltransferase superfamily. METL family.

It catalyses the reaction cytidine(32) in tRNA(Thr) + S-adenosyl-L-methionine = N(3)-methylcytidine(32) in tRNA(Thr) + S-adenosyl-L-homocysteine + H(+). Functionally, S-adenosyl-L-methionine-dependent methyltransferase that mediates N(3)-methylcytidine modification of residue 32 of the tRNA anticodon loop of tRNA(Thr). Does not catalyze N(3)-methylcytidine modification of tRNA(Ser). The protein is tRNA N(3)-methylcytidine methyltransferase trm140 of Schizosaccharomyces pombe (strain 972 / ATCC 24843) (Fission yeast).